Reading from the N-terminus, the 214-residue chain is Octanoyltransferase (214 aa).

In terms of domain architecture, BPL/LPL catalytic spans 34–214 (GVQKELVWLL…KFNEIFSNFN (181 aa)). Substrate is bound by residues 73–80 (RGGKYTYH), 145–147 (AFG), and 158–160 (GVS). The Acyl-thioester intermediate role is filled by Cys176.

It belongs to the LipB family.

It is found in the cytoplasm. It carries out the reaction octanoyl-[ACP] + L-lysyl-[protein] = N(6)-octanoyl-L-lysyl-[protein] + holo-[ACP] + H(+). The protein operates within protein modification; protein lipoylation via endogenous pathway; protein N(6)-(lipoyl)lysine from octanoyl-[acyl-carrier-protein]: step 1/2. Functionally, catalyzes the transfer of endogenously produced octanoic acid from octanoyl-acyl-carrier-protein onto the lipoyl domains of lipoate-dependent enzymes. Lipoyl-ACP can also act as a substrate although octanoyl-ACP is likely to be the physiological substrate. The chain is Octanoyltransferase from Ehrlichia chaffeensis (strain ATCC CRL-10679 / Arkansas).